Consider the following 163-residue polypeptide: MPSFDIVSEVDLHEVRNAVENAQRELTTRWDFRNVEASFELNEKTESVKTTSVSEFQVQQLLDILREKMAKRGIDGAVLNIPEEMTHSGKTYSVEATLKQGIDTPLAKKIVKMIKDSKLKVQAQIQGEQVRVTGKSRDDLQAVMKLVREGELGQPFQFTNFRD.

The protein belongs to the YajQ family.

In terms of biological role, nucleotide-binding protein. This Proteus mirabilis (strain HI4320) protein is Nucleotide-binding protein PMI0103.